The chain runs to 352 residues: Galactokinase (352 aa).

Position 17–20 (17–20 (EHTD)) interacts with substrate. ATP is bound by residues Ser-49 and 101–107 (GAGLSSS). Mg(2+) contacts are provided by Ser-107 and Glu-139. Asp-151 (proton acceptor) is an active-site residue. Tyr-200 serves as a coordination point for substrate.

It belongs to the GHMP kinase family. GalK subfamily. As to quaternary structure, monomer.

The protein localises to the cytoplasm. The enzyme catalyses alpha-D-galactose + ATP = alpha-D-galactose 1-phosphate + ADP + H(+). Its pathway is carbohydrate metabolism; galactose metabolism. Functionally, catalyzes the transfer of the gamma-phosphate of ATP to D-galactose to form alpha-D-galactose-1-phosphate (Gal-1-P). Is very specific for its substrate, since it is not able to use D-glucose, D-fructose, D-mannose, 2-deoxy-D-glucose, and D-glucosamine as substrates. This Pyrococcus furiosus (strain ATCC 43587 / DSM 3638 / JCM 8422 / Vc1) protein is Galactokinase.